A 356-amino-acid polypeptide reads, in one-letter code: Mitogen-activated protein kinase PMK1 (356 aa).

Residues 24–312 enclose the Protein kinase domain; that stretch reads YDIQDVVGEG…VEEALKHPYL (289 aa). ATP is bound by residues 30 to 38 and Lys53; that span reads VGEGAYGVV.

It belongs to the protein kinase superfamily. CMGC Ser/Thr protein kinase family. MAP kinase subfamily. It depends on Mg(2+) as a cofactor. In terms of processing, phosphorylated by MST7.

The enzyme catalyses L-seryl-[protein] + ATP = O-phospho-L-seryl-[protein] + ADP + H(+). It catalyses the reaction L-threonyl-[protein] + ATP = O-phospho-L-threonyl-[protein] + ADP + H(+). Mitogen-activated protein kinase; part of the MST11-MST7-PMK1 MAP kinase (MAPK) cascade that is essential for appressorium formation, penetration and invasive growth. Central regulator of appressorium development that acts downstream of the cAMP signal. The MST11-MST7-PMK1 MAP kinase cascade transduces signals from the cell surface sensors MDB2 and SHO1 that recognize various surface signals such as surface hydrophobicity, cutin monomers, and rice leaf waxes. Regulates expression of secreted fungal effector proteins implicated of host immune defenses, preventing reactive oxygen species generation and excessive callose deposition at plasmodesmata. Furthermore, controls the hyphal constriction required for fungal growth from one rice cell to the neighboring cell, enabling host tissue colonization and blast disease. Targets downstream of the PMK1-MAPK pathway include transcription factor MST12 and pathogenicity-related genes GAS1 and GAS2, both of which are expressed during appressorium formation, even if regulation of MST12 is not associated with expression of GAS1 or GAS2. In Pyricularia oryzae (Rice blast fungus), this protein is Mitogen-activated protein kinase PMK1.